Reading from the N-terminus, the 58-residue chain is Large ribosomal subunit protein uL24 (58 aa).

The protein belongs to the universal ribosomal protein uL24 family. As to quaternary structure, part of the 50S ribosomal subunit.

Functionally, one of two assembly initiator proteins, it binds directly to the 5'-end of the 23S rRNA, where it nucleates assembly of the 50S subunit. Its function is as follows. One of the proteins that surrounds the polypeptide exit tunnel on the outside of the subunit. The sequence is that of Large ribosomal subunit protein uL24 (rplX) from Spiroplasma citri.